The primary structure comprises 192 residues: Probable cobalt-precorrin-6B C(15)-methyltransferase (decarboxylating) (192 aa).

Residues Thr-20, 44–48 (GSGTG), Glu-68, and Ala-96 contribute to the S-adenosyl-L-methionine site.

It belongs to the methyltransferase superfamily. Archaeal-type CbiT family.

It carries out the reaction Co-precorrin-6B + S-adenosyl-L-methionine = Co-precorrin-7 + S-adenosyl-L-homocysteine + CO2. The protein operates within cofactor biosynthesis; adenosylcobalamin biosynthesis; cob(II)yrinate a,c-diamide from sirohydrochlorin (anaerobic route): step 8/10. Catalyzes the methylation of C-15 in cobalt-precorrin-6B followed by the decarboxylation of C-12 to form cobalt-precorrin-7. The protein is Probable cobalt-precorrin-6B C(15)-methyltransferase (decarboxylating) of Sulfurisphaera tokodaii (strain DSM 16993 / JCM 10545 / NBRC 100140 / 7) (Sulfolobus tokodaii).